Consider the following 154-residue polypeptide: 17.4 kDa class I heat shock protein (154 aa).

Residues 40 to 154 (DAAAFAGARI…PDVKSIQITG (115 aa)) form the sHSP domain.

It belongs to the small heat shock protein (HSP20) family. May form oligomeric structures.

The protein localises to the cytoplasm. This chain is 17.4 kDa class I heat shock protein (HSP17.4), found in Oryza sativa subsp. japonica (Rice).